Here is a 1037-residue protein sequence, read N- to C-terminus: Signal-induced proliferation-associated protein 1 (1037 aa).

Positions 1–85 (MWAGGVGSPR…ASRPAATPTR (85 aa)) are disordered. At threonine 62 the chain carries Phosphothreonine. A phosphoserine mark is found at serine 65, serine 178, serine 299, and serine 309. The region spanning 316 to 534 (LLTLDEQVLS…RTRQQYLQDL (219 aa)) is the Rap-GAP domain. One can recognise a PDZ domain in the interval 682–758 (ELALPRDGQG…VCVTVLPPDE (77 aa)). Phosphoserine is present on residues serine 812 and serine 834. Disordered stretches follow at residues 830 to 849 (HNSL…LPNT) and 855 to 898 (LVTT…ASIL). Low complexity predominate over residues 871 to 881 (PPSQDQSGSPS). A Phosphoserine modification is found at serine 907. Residues 943 to 969 (REGQPISESGDPKEALKCDSEPEPGSL) form a disordered region. A compositionally biased stretch (basic and acidic residues) spans 952–962 (GDPKEALKCDS). The stretch at 968-1025 (SLSEKVSHLESMLWKLQEDLQREKADRAALEEEVRSLRHNNQRLLAESESAATRLLLA) forms a coiled coil.

As to quaternary structure, interacts with RRP1B; the interaction leads to inhibition of SIPA1 GTPase activity. Preferentially expressed in both fetal and adult lymphohematopoietic tissues.

It localises to the nucleus. Its subcellular location is the cytoplasm. It is found in the perinuclear region. The protein resides in the endomembrane system. GTPase activator for the nuclear Ras-related regulatory proteins Rap1, Rsr1 and Ran in vitro, converting them to the putatively inactive GDP-bound state. Affects cell cycle progression. The polypeptide is Signal-induced proliferation-associated protein 1 (Sipa1) (Mus musculus (Mouse)).